A 519-amino-acid polypeptide reads, in one-letter code: MELASARLLRGQIPWRGLLLTASLLTYWSPLTTAQVTVDAVPPNVVEEKSVLLLAHNLPQEFQVFYWYKGTTLNPDSEIARYIRSDNMSKTGPAYSGRETIYSNGSLFFQNVNKTDERAYTLSVFDQQFNPIQTSVQFRVYPALQKPNVTGNNSNPMEGEPFVSLMCEPYTNNTSYLWSRNGESLSEGDRVTFSEGNRTLTLLNVRRTDKGYYECEARNPATFNRSDPFNLDVIYGPDAPVISPPDIYLHQGSNLNLSCHADSNPPAQYFWLINEKLQTSSQELFISNITTNNSGTYACFVNNTVTGLSRTTVKNITVFEPVTQPSIQITNTTVKELGSVTLTCFSKDTGVSVRWLFNSQSLQLTDRMTLSQDNSTLRIDPIKREDAGDYQCEISNPVSFRISHPIKLDVIPDPTQGNSGLSEGAIAGIVIGSVAGVALIAALAYFLYSRKTGGGSDHRDLTEHKPSTSSHNLGPSDDSPNKVDDVSYSVLNFNAQQSKRPTSASSSPTETVYSVVKKK.

Positions 1 to 34 (MELASARLLRGQIPWRGLLLTASLLTYWSPLTTA) are cleaved as a signal peptide. Residue Gln35 is modified to Pyrrolidone carboxylic acid. The Extracellular portion of the chain corresponds to 35-425 (QVTVDAVPPN…QGNSGLSEGA (391 aa)). Residues 39 to 142 (DAVPPNVVEE…QTSVQFRVYP (104 aa)) are required for homophilic binding. The Ig-like V-type domain occupies 42-140 (PPNVVEEKSV…PIQTSVQFRV (99 aa)). Residues Asn87, Asn104, Asn113, Asn148, Asn152, Asn173, Asn197, Asn224, Asn256, Asn288, Asn292, Asn302, Asn315, and Asn331 are each glycosylated (N-linked (GlcNAc...) asparagine). Ig-like C2-type domains follow at residues 147–232 (PNVT…FNLD), 237–317 (PDAP…KNIT), and 325–403 (PSIQ…FRIS). Cys167 and Cys215 are oxidised to a cystine. The cysteines at positions 259 and 299 are disulfide-linked. Cys344 and Cys392 are disulfide-bonded. Asn374 is a glycosylation site (N-linked (GlcNAc...) asparagine; atypical). The helical transmembrane segment at 426–446 (IAGIVIGSVAGVALIAALAYF) threads the bilayer. Positions 445–457 (YFLYSRKTGGGSD) are interaction with calmodulin. The Cytoplasmic portion of the chain corresponds to 447–519 (LYSRKTGGGS…ETVYSVVKKK (73 aa)). The segment at 447–519 (LYSRKTGGGS…ETVYSVVKKK (73 aa)) is interaction with FLNA. The interval 455–519 (GSDHRDLTEH…ETVYSVVKKK (65 aa)) is disordered. A compositionally biased stretch (basic and acidic residues) spans 456–466 (SDHRDLTEHKP). Positions 484–519 (DDVSYSVLNFNAQQSKRPTSASSSPTETVYSVVKKK) are required for interaction with PTPN11 and PTPN6 and for control of phosphorylation level. At Tyr488 the chain carries Phosphotyrosine; by SRC, LCK, INSR and EGFR. Positions 489 to 512 (SVLNFNAQQSKRPTSASSSPTETV) are enriched in polar residues. Ser503 is modified (phosphoserine). At Tyr513 the chain carries Phosphotyrosine; by INSR, SRC and LCK. The interval 513–516 (YSVV) is essential for interaction with PTPN11 and PTPN6.

This sequence belongs to the immunoglobulin superfamily. CEA family. In terms of assembly, monomer. Oligomer. Heterodimer. Homodimer. Cis-dimer/oligomer (via Ig-like C2-type and/or via cytoplasmic domains); induced by trans-homophilic cell adhesion through an allosteric mechanism transmitted by the Ig-like V-type domain, and is regulated by intracellular calcium and calmodulin. Interacts (via cytoplasmic domain) with calmodulin in a calcium dependent manner; reduces homophilic cell adhesion through dissociation of dimer. Isoform 1 interacts (via cytoplasmic domain) with PTPN11 (preferentially) and PTPN6; cis-homodimer form is preferred; this interaction is decreased by formation of isoform 1 / isoform 2 cis-heterodimers and is dependent on the monomer/dimer equilibrium; this interaction is phosphorylation-dependent. Isoform 1 interacts with LYN. Isoform 1 interacts (via cytoplasmic domain) with SRC (via SH2 domain); this interaction is regulated by trans-homophilic cell adhesion. Isoform 1 interacts (via cytoplasmic domain) with LCK; mediates phosphorylation at Tyr-488 and Tyr-513 resulting in PTPN6 association. Isoform 1 interacts with PTPN6; this interaction is phosphorylation-dependent and causes a profound decrease in TCR stimulation-induced CD247 and ZAP70 phosphorylation. Isoform 1 interacts with TCR/CD3 complex through TCR beta chain and CD3E; colocalizes at the cell surface and upon stimulation of the TCR/CD3 complex recruits PTPN6 in the TCR/CD3 complex, resulting in dephosphorylation of CD247 and ZAP70. Isoform 1 interacts (via cytoplasmic domain) with SHC1 (via SH2 domain); SHC1 mediates interaction with INSR or EGFR in a Ser-503 phosphorylation-dependent manner. Isoform 1 interacts with EGFR; the interaction is indirect. Isoform 1 interacts with CSF3R; down-regulates the CSF3R-STAT3 pathway through recruitment of PTPN6 that dephosphorylates CSF3R. Isoform 1 (phosphorylated form) interacts with TLR4 and SYK; recruits PTPN6 that dephosphorylates SYK, reducing the production of reactive oxygen species (ROS) and lysosome disruption, leading to a reduction of the inflammasome activity. Isoform 1 interacts with FLNA; inhibits cell migration and cell scattering by interfering with the interaction of FLNA with RALA. Isoform 1 interacts (via cytoplasmic domain) with PXN; the interaction is phosphotyrosyl-dependent. Isoform 1 interacts with KLRK1; recruits PTPN6 that dephosphorylates VAV1. Isoform 1 interacts with CEACAM8. Isoform 1 interacts with FASN; this interaction is insulin and phosphorylation-dependent; reduces fatty-acid synthase activity. Interacts (via Ig-like V-type) with HAVCR2 (via Ig-like V-type); facilitates the maturation and cell surface expression of HAVCR2 thereby regulating T-cell tolerance induction. Isoform 2 interacts (via the cytoplasmic domain) with ANXA2; this interaction is regulated by phosphorylation and appears in the AIIt complex. Interacts (via Lewis X moieties) with CD209 (via C-type lectin domain); this interaction is regulated by the glycosylation pattern of CEACAM1 on cell types and regulates contact between dendritic cells and neutrophils. Post-translationally, phosphorylated on serine and tyrosine. Isoform 1 is phosphorylated on tyrosine by Src family kinases like SRC and LCK and by receptor like CSF3R, EGFR and INSR upon stimulation. Phosphorylated at Ser-503; mediates activity. Phosphorylated at Tyr-488; regulates activity. Phosphorylated at Tyr-488 by EGFR and INSR upon stimulation; this phosphorylation is Ser-503-phosphorylation-dependent; mediates cellular internalization; increases interaction with FASN. Phosphorylated at Tyr-488 and Tyr-513 by LCK; mediates PTPN6 association and is regulated by homophilic ligation of CEACAM1 in the absence of T-cell activation. Phosphorylated at Tyr-513; mediates interaction with PTPN11. In terms of processing, phosphorylated on serine and threonine. Expressed in epithelia, vessel endothelia, leukocytes and platelets. Isoform 1 and isoform 2 are highly expressed in liver and intestine, moderately in lung, and weakly in muscle, kidney, and spleen. Expressed in granulocytes, lymphocytes, granulocytes, B cells, and T-cells.

It localises to the cell membrane. The protein localises to the lateral cell membrane. Its subcellular location is the apical cell membrane. The protein resides in the basal cell membrane. It is found in the cell junction. It localises to the adherens junction. The protein localises to the cytoplasmic vesicle. Its subcellular location is the secretory vesicle. The protein resides in the cell projection. It is found in the microvillus membrane. Its function is as follows. Cell adhesion protein that mediates homophilic cell adhesion in a calcium-independent manner. Plays a role as coinhibitory receptor in immune response, insulin action and also functions as an activator during angiogenesis. Its coinhibitory receptor function is phosphorylation- and PTPN6 -dependent, which in turn, suppress signal transduction of associated receptors by dephosphorylation of their downstream effectors. Plays a role in immune response, of T-cells, natural killer (NK) and neutrophils. Upon TCR/CD3 complex stimulation, inhibits TCR-mediated cytotoxicity by blocking granule exocytosis by mediating homophilic binding to adjacent cells, allowing interaction with and phosphorylation by LCK and interaction with the TCR/CD3 complex which recruits PTPN6 resulting in dephosphorylation of CD247 and ZAP70. Also inhibits T-cell proliferation and cytokine production through inhibition of JNK cascade and plays a crucial role in regulating autoimmunity and anti-tumor immunity by inhibiting T-cell through its interaction with HAVCR2. Upon natural killer (NK) cells activation, inhibit KLRK1-mediated cytolysis of CEACAM1-bearing tumor cells by trans-homophilic interactions with CEACAM1 on the target cell and lead to cis-interaction between CEACAM1 and KLRK1, allowing PTPN6 recruitment and then VAV1 dephosphorylation. Upon neutrophils activation negatively regulates IL1B production by recruiting PTPN6 to a SYK-TLR4-CEACAM1 complex, that dephosphorylates SYK, reducing the production of reactive oxygen species (ROS) and lysosome disruption, which in turn, reduces the activity of the inflammasome. Down-regulates neutrophil production by acting as a coinhibitory receptor for CSF3R by downregulating the CSF3R-STAT3 pathway through recruitment of PTPN6 that dephosphorylates CSF3R. Also regulates insulin action by promoting INS clearance and regulating lipogenesis in liver through regulating insulin signaling. Upon INS stimulation, undergoes phosphorylation by INSR leading to INS clearance by increasing receptor-mediated insulin endocytosis. This inernalization promotes interaction with FASN leading to receptor-mediated insulin degradation and to reduction of FASN activity leading to negative regulation of fatty acid synthesis. INSR-mediated phosphorylation also provokes a down-regulation of cell proliferation through SHC1 interaction resulting in decrease coupling of SHC1 to the MAPK3/ERK1-MAPK1/ERK2 and phosphatidylinositol 3-kinase pathways. Functions as activator in angiogenesis by promoting blood vessel remodeling through endothelial cell differentiation and migration and in arteriogenesis by increasing the number of collateral arteries and collateral vessel calibers after ischemia. Also regulates vascular permeability through the VEGFR2 signaling pathway resulting in control of nitric oxide production. Down-regulates cell growth in response to EGF through its interaction with SHC1 that mediates interaction with EGFR resulting in decrease coupling of SHC1 to the MAPK3/ERK1-MAPK1/ERK2 pathway. Negatively regulates platelet aggregation by decreasing platelet adhesion on type I collagen through the GPVI-FcRgamma complex. Inhibits cell migration and cell scattering through interaction with FLNA; interferes with the interaction of FLNA with RALA. Mediates bile acid transport activity in a phosphorylation dependent manner. Negatively regulates osteoclastogenesis. Cell adhesion proteins that mediates homophilic cell adhesion in a calcium-independent manner. Promotes populations of T-cells regulating IgA production and secretion associated with control of the commensal microbiota and resistance to enteropathogens. The sequence is that of Cell adhesion molecule CEACAM1 from Rattus norvegicus (Rat).